The primary structure comprises 1020 residues: C2 and GRAM domain-containing protein At1g03370 (1020 aa).

The C2 1 domain maps to 1–102; that stretch reads MKLQVRVVEA…ENQSLGTVWY (102 aa). The Ca(2+) site is built by Asp-17, Asp-23, Asp-69, Asp-71, and Asp-77. Polar residues-rich tracts occupy residues 134–144 and 158–172; these read TSSGDQTSASR and TCASPSRSDDASSIP. The tract at residues 134–172 is disordered; sequence TSSGDQTSASRSPDLRLESPIDPSTCASPSRSDDASSIP. The 173-residue stretch at 249–421 folds into the VASt 1 domain; that stretch reads SGGVVVDQLF…LLAQSVKPVD (173 aa). The chain crosses the membrane as a helical span at residues 454-474; the sequence is FTVLSTFLIGIYVFVHIVFAI. The C2 2 domain maps to 517 to 635; it reads QARKQKGSDH…NISDLADVWV (119 aa). Ca(2+) contacts are provided by Asp-551, Asp-557, Asp-604, Phe-605, and Asp-606. Positions 689-752 constitute a GRAM domain; the sequence is AFQKLFGLPQ…LWEDIEEIQV (64 aa). The 163-residue stretch at 848–1010 folds into the VASt 2 domain; sequence RFSEVFSLTL…MTFGFLEKEY (163 aa).

It depends on Ca(2+) as a cofactor.

It is found in the membrane. The sequence is that of C2 and GRAM domain-containing protein At1g03370 from Arabidopsis thaliana (Mouse-ear cress).